The primary structure comprises 458 residues: Argininosuccinate lyase (458 aa).

Belongs to the lyase 1 family. Argininosuccinate lyase subfamily.

It localises to the cytoplasm. It catalyses the reaction 2-(N(omega)-L-arginino)succinate = fumarate + L-arginine. It participates in amino-acid biosynthesis; L-arginine biosynthesis; L-arginine from L-ornithine and carbamoyl phosphate: step 3/3. In Buchnera aphidicola subsp. Baizongia pistaciae (strain Bp), this protein is Argininosuccinate lyase.